A 338-amino-acid chain; its full sequence is E3 ubiquitin-protein ligase RING1 (338 aa).

A disordered region spans residues 102-124; the sequence is TTTSSSASIDPNNPSLSGPTRSG. Polar residues predominate over residues 110–121; the sequence is IDPNNPSLSGPT. Residues 224-265 form an RING-type; atypical zinc finger; the sequence is CAVCMDDFEEGTEAKQMPCKHLYHKDCLLPWLELHNSCPVCR. Composition is skewed to basic and acidic residues over residues 267–279 and 298–309; these read ELPTDDPDYERRV and SDGDNRTVERSF. Residues 267-338 are disordered; it reads ELPTDDPDYE…NAETRQEDLD (72 aa).

Auto-ubiquitinated as part of the enzymatic reaction. As to expression, mostly expressed in cotton fibers, and, to a lower extent, in leaves and flowers.

It catalyses the reaction S-ubiquitinyl-[E2 ubiquitin-conjugating enzyme]-L-cysteine + [acceptor protein]-L-lysine = [E2 ubiquitin-conjugating enzyme]-L-cysteine + N(6)-ubiquitinyl-[acceptor protein]-L-lysine.. It participates in protein modification; protein ubiquitination. E3 ubiquitin-protein ligase which accepts ubiquitin from an E2 ubiquitin-conjugating enzyme in the form of a thioester and then directly transfers the ubiquitin to targeted substrates. Promotes polyubiquitination of target proteins. The sequence is that of E3 ubiquitin-protein ligase RING1 (RING1) from Gossypium hirsutum (Upland cotton).